The sequence spans 1898 residues: Protein NYNRIN (1898 aa).

5 disordered regions span residues 289–315 (SNNQDGMDSAQEEGTVQATSSQDSTNH), 424–450 (LPSAESPAGRPDGGLGGEAALQNCPRP), 467–533 (DVKD…TDQS), 618–691 (EPTT…TDAG), and 711–731 (VSLLKGQGQAGRQGPQSSGTL). Over residues 618–627 (EPTTPKTPQA) the composition is skewed to polar residues. Residues 649–672 (PAATVSKAPAASKAPAAPKVPVTP) show a composition bias toward low complexity. The region spanning 792–942 (LRRVVIDGSS…LGRDGPTLDE (151 aa)) is the RNase NYN domain. The interval 968–1019 (SASVTELSDDADSGPLESLPNMEEVREEKEERQDEEQRQGQGTQKAAEEDDL) is disordered. Residues 990-1005 (EEVREEKEERQDEEQR) are compositionally biased toward basic and acidic residues. The region spanning 1304–1450 (LSTFVCIHMS…VDTLAKQGAQ (147 aa)) is the RNase H type-1 domain. The next 2 membrane-spanning stretches (helical) occupy residues 1372 to 1392 (VVFLTHCNWIFSLLWELLPLW) and 1408 to 1428 (PSLLSYIISLTSGLSSLPFIY). In terms of domain architecture, Integrase catalytic spans 1609–1774 (RSTAPWSNLQ…ESRLTEPLWW (166 aa)).

The protein resides in the membrane. The chain is Protein NYNRIN (NYNRIN) from Homo sapiens (Human).